Reading from the N-terminus, the 118-residue chain is uncharacterized protein (118 aa).

A helical membrane pass occupies residues 95–115; it reads IIINLVIILAMYAPEIIGKLL.

Belongs to the M.jannaschii MJ0023/MJ0349/MJ1072/MJ1074/MJ1107/MJECL16 family.

It is found in the membrane. This is an uncharacterized protein from Methanocaldococcus jannaschii (strain ATCC 43067 / DSM 2661 / JAL-1 / JCM 10045 / NBRC 100440) (Methanococcus jannaschii).